We begin with the raw amino-acid sequence, 129 residues long: Small ribosomal subunit protein uS11 (129 aa).

It belongs to the universal ribosomal protein uS11 family. In terms of assembly, part of the 30S ribosomal subunit. Interacts with proteins S7 and S18. Binds to IF-3.

Located on the platform of the 30S subunit, it bridges several disparate RNA helices of the 16S rRNA. Forms part of the Shine-Dalgarno cleft in the 70S ribosome. The protein is Small ribosomal subunit protein uS11 of Ectopseudomonas mendocina (strain ymp) (Pseudomonas mendocina).